A 941-amino-acid chain; its full sequence is Glycine dehydrogenase (decarboxylating) (941 aa).

Lys692 carries the post-translational modification N6-(pyridoxal phosphate)lysine.

It belongs to the GcvP family. In terms of assembly, the glycine cleavage system is composed of four proteins: P, T, L and H. Requires pyridoxal 5'-phosphate as cofactor.

It catalyses the reaction N(6)-[(R)-lipoyl]-L-lysyl-[glycine-cleavage complex H protein] + glycine + H(+) = N(6)-[(R)-S(8)-aminomethyldihydrolipoyl]-L-lysyl-[glycine-cleavage complex H protein] + CO2. Its function is as follows. The glycine cleavage system catalyzes the degradation of glycine. The P protein binds the alpha-amino group of glycine through its pyridoxal phosphate cofactor; CO(2) is released and the remaining methylamine moiety is then transferred to the lipoamide cofactor of the H protein. This is Glycine dehydrogenase (decarboxylating) from Mycobacterium bovis (strain ATCC BAA-935 / AF2122/97).